We begin with the raw amino-acid sequence, 833 residues long: Leucine--tRNA ligase (833 aa).

Positions 41–52 match the 'HIGH' region motif; sequence PYPSGAGLHVGH. The 'KMSKS' region motif lies at 610–614; sequence KMSKS. Residue lysine 613 coordinates ATP.

Belongs to the class-I aminoacyl-tRNA synthetase family.

The protein resides in the cytoplasm. The catalysed reaction is tRNA(Leu) + L-leucine + ATP = L-leucyl-tRNA(Leu) + AMP + diphosphate. In Streptococcus pyogenes serotype M1, this protein is Leucine--tRNA ligase.